The sequence spans 347 residues: MTFSVAVAGASGYAGGELLRILADHPDFDIRTVTAHQNAGQPLAAHQPHLRSLAGLTLSESTAENLAGHDVVFLALPHGKSGEIATQLPADTLVVDCGADHRLEDPDAWAAFYGGEHFGSWAYGVPELPVGAGRQRERLAGAKRIAAPGCNASAVSLALAPGIHAGLIEDADIVSVLAVGPSGAGKALKTMYLASEILGSANPYAVGGTHRHIPEIQQSLRKAGALSPTISFIPVLVPMSRGILATSTARVKPGVSAAQVQAAWEETYAGEPFVQVLPAGSVPRTSDVLGANTALIGVALDAAAGRVVAVLAIDNLYKGTAGAAIQSANIALGLAETAGLSVNGVAP.

Residue C150 is part of the active site.

The protein belongs to the NAGSA dehydrogenase family. Type 1 subfamily.

The protein resides in the cytoplasm. The enzyme catalyses N-acetyl-L-glutamate 5-semialdehyde + phosphate + NADP(+) = N-acetyl-L-glutamyl 5-phosphate + NADPH + H(+). Its pathway is amino-acid biosynthesis; L-arginine biosynthesis; N(2)-acetyl-L-ornithine from L-glutamate: step 3/4. Functionally, catalyzes the NADPH-dependent reduction of N-acetyl-5-glutamyl phosphate to yield N-acetyl-L-glutamate 5-semialdehyde. This is N-acetyl-gamma-glutamyl-phosphate reductase from Leifsonia xyli subsp. xyli (strain CTCB07).